A 349-amino-acid chain; its full sequence is Cobalt-precorrin-5B C(1)-methyltransferase (349 aa).

The protein belongs to the CbiD family.

It carries out the reaction Co-precorrin-5B + S-adenosyl-L-methionine = Co-precorrin-6A + S-adenosyl-L-homocysteine. Its pathway is cofactor biosynthesis; adenosylcobalamin biosynthesis; cob(II)yrinate a,c-diamide from sirohydrochlorin (anaerobic route): step 6/10. Functionally, catalyzes the methylation of C-1 in cobalt-precorrin-5B to form cobalt-precorrin-6A. The sequence is that of Cobalt-precorrin-5B C(1)-methyltransferase from Saccharolobus islandicus (strain Y.N.15.51 / Yellowstone #2) (Sulfolobus islandicus).